The primary structure comprises 100 residues: Ubiquitin-related modifier 1 homolog (100 aa).

Position 100 is a 1-thioglycine (glycine 100). Glycine 100 participates in a covalent cross-link: Glycyl lysine isopeptide (Gly-Lys) (interchain with K-? in acceptor proteins).

Belongs to the URM1 family. In terms of assembly, interacts with cer. In terms of processing, C-terminal thiocarboxylation occurs in 2 steps, it is first acyl-adenylated (-COAMP) via the hesA/moeB/thiF part of the MOCS3 homolog, then thiocarboxylated (-COSH) via the rhodanese domain of the MOCS3 homolog.

It is found in the cytoplasm. Its pathway is tRNA modification; 5-methoxycarbonylmethyl-2-thiouridine-tRNA biosynthesis. Functionally, acts as a sulfur carrier required for 2-thiolation of mcm(5)S(2)U at tRNA wobble positions of cytosolic tRNA(Lys), tRNA(Glu) and tRNA(Gln). Serves as sulfur donor in tRNA 2-thiolation reaction by being thiocarboxylated (-COSH) at its C-terminus by MOCS3. The sulfur is then transferred to tRNA to form 2-thiolation of mcm(5)S(2)U. Also acts as a ubiquitin-like protein (UBL) that is covalently conjugated via an isopeptide bond to lysine residues of target proteins such as Prx2/Jafrac1, Ciao1, Eip71CD and GILT1. The thiocarboxylated form serves as substrate for conjugation and oxidative stress specifically induces the formation of UBL-protein conjugates. The sequence is that of Ubiquitin-related modifier 1 homolog from Drosophila willistoni (Fruit fly).